Reading from the N-terminus, the 131-residue chain is NADH-quinone oxidoreductase subunit I 2 (131 aa).

2 4Fe-4S ferredoxin-type domains span residues 42-71 and 81-110; these read LKVSHSKAKCVCCYLCPTVCPAKCITVEAG and ERYEIDMLRCIFCGYCVEACPVDALKMTGE. [4Fe-4S] cluster is bound by residues cysteine 51, cysteine 54, cysteine 57, cysteine 61, cysteine 90, cysteine 93, cysteine 96, and cysteine 100.

The protein belongs to the complex I 23 kDa subunit family. In terms of assembly, NDH-1 is composed of 14 different subunits. Subunits NuoA, H, J, K, L, M, N constitute the membrane sector of the complex. It depends on [4Fe-4S] cluster as a cofactor.

The protein localises to the cell inner membrane. The enzyme catalyses a quinone + NADH + 5 H(+)(in) = a quinol + NAD(+) + 4 H(+)(out). Its function is as follows. NDH-1 shuttles electrons from NADH, via FMN and iron-sulfur (Fe-S) centers, to quinones in the respiratory chain. The immediate electron acceptor for the enzyme in this species is believed to be ubiquinone. Couples the redox reaction to proton translocation (for every two electrons transferred, four hydrogen ions are translocated across the cytoplasmic membrane), and thus conserves the redox energy in a proton gradient. This Geobacter metallireducens (strain ATCC 53774 / DSM 7210 / GS-15) protein is NADH-quinone oxidoreductase subunit I 2.